The sequence spans 777 residues: 1,4-alpha-glucan branching enzyme GlgB (777 aa).

The Nucleophile role is filled by Asp-408. Glu-461 serves as the catalytic Proton donor.

This sequence belongs to the glycosyl hydrolase 13 family. GlgB subfamily. As to quaternary structure, monomer.

It catalyses the reaction Transfers a segment of a (1-&gt;4)-alpha-D-glucan chain to a primary hydroxy group in a similar glucan chain.. The protein operates within glycan biosynthesis; glycogen biosynthesis. Its function is as follows. Catalyzes the formation of the alpha-1,6-glucosidic linkages in glycogen by scission of a 1,4-alpha-linked oligosaccharide from growing alpha-1,4-glucan chains and the subsequent attachment of the oligosaccharide to the alpha-1,6 position. The sequence is that of 1,4-alpha-glucan branching enzyme GlgB from Actinobacillus pleuropneumoniae serotype 3 (strain JL03).